A 164-amino-acid polypeptide reads, in one-letter code: Putative 4-hydroxy-4-methyl-2-oxoglutarate aldolase (164 aa).

Substrate is bound by residues 75–78 (GDML) and arginine 97. Aspartate 98 is an a divalent metal cation binding site.

It belongs to the class II aldolase/RraA-like family. As to quaternary structure, homotrimer. The cofactor is a divalent metal cation.

The enzyme catalyses 4-hydroxy-4-methyl-2-oxoglutarate = 2 pyruvate. It carries out the reaction oxaloacetate + H(+) = pyruvate + CO2. Functionally, catalyzes the aldol cleavage of 4-hydroxy-4-methyl-2-oxoglutarate (HMG) into 2 molecules of pyruvate. Also contains a secondary oxaloacetate (OAA) decarboxylase activity due to the common pyruvate enolate transition state formed following C-C bond cleavage in the retro-aldol and decarboxylation reactions. In Hahella chejuensis (strain KCTC 2396), this protein is Putative 4-hydroxy-4-methyl-2-oxoglutarate aldolase.